We begin with the raw amino-acid sequence, 188 residues long: Probable nicotinate-nucleotide adenylyltransferase (188 aa).

The protein belongs to the NadD family.

It carries out the reaction nicotinate beta-D-ribonucleotide + ATP + H(+) = deamido-NAD(+) + diphosphate. The protein operates within cofactor biosynthesis; NAD(+) biosynthesis; deamido-NAD(+) from nicotinate D-ribonucleotide: step 1/1. In terms of biological role, catalyzes the reversible adenylation of nicotinate mononucleotide (NaMN) to nicotinic acid adenine dinucleotide (NaAD). This is Probable nicotinate-nucleotide adenylyltransferase from Sulfurovum sp. (strain NBC37-1).